Consider the following 412-residue polypeptide: MQVKNRLTPFFENITFDREDNEMILNFGPQHPSAHGQLRLMLHLQQEMIVKAHPDIGYLHRGMEKMAENMIYNEFMPTTDRMDYIASSANNYGFALAVERLIGLEVPRRAKVIRMMLLEINRLMSHLFWLATTALDIGAMTVFLFAFREREYLMDIMEGYCGARLTHAAIRIGGVPLDIQDTFITQLKTFLDKLPQNIKDYEDLLDTNRIWLMRMEEVGVISKEMALSWGCSGPMLRASGVAWDIRKEEPYELYDEVEFRVPYSDKGDNFARYRIYMEEMRESAKILYQTIDMYEKCVKDNQTELMAHAPKYISAPKLDIMTQNYSLMQHFVLVTQGMRPPVGEVYVATESPKGELGFYINSQGGPYPYRLKLRAPSFWHTGILTDILPGHYIPDVVSIIGTTNIVFGEVDR.

Belongs to the complex I 49 kDa subunit family. As to quaternary structure, NDH-1 is composed of 14 different subunits. Subunits NuoB, C, D, E, F, and G constitute the peripheral sector of the complex.

The protein localises to the cell inner membrane. It catalyses the reaction a quinone + NADH + 5 H(+)(in) = a quinol + NAD(+) + 4 H(+)(out). Its function is as follows. NDH-1 shuttles electrons from NADH, via FMN and iron-sulfur (Fe-S) centers, to quinones in the respiratory chain. The immediate electron acceptor for the enzyme in this species is believed to be ubiquinone. Couples the redox reaction to proton translocation (for every two electrons transferred, four hydrogen ions are translocated across the cytoplasmic membrane), and thus conserves the redox energy in a proton gradient. The polypeptide is NADH-quinone oxidoreductase subunit D (Sulfurimonas denitrificans (strain ATCC 33889 / DSM 1251) (Thiomicrospira denitrificans (strain ATCC 33889 / DSM 1251))).